A 95-amino-acid chain; its full sequence is Small ribosomal subunit protein bS18 (95 aa).

The protein belongs to the bacterial ribosomal protein bS18 family. In terms of assembly, part of the 30S ribosomal subunit. Forms a tight heterodimer with protein bS6.

Binds as a heterodimer with protein bS6 to the central domain of the 16S rRNA, where it helps stabilize the platform of the 30S subunit. The protein is Small ribosomal subunit protein bS18 of Rickettsia akari (strain Hartford).